The following is a 305-amino-acid chain: Carbamate kinase (305 aa).

It belongs to the carbamate kinase family.

Its subcellular location is the cytoplasm. It carries out the reaction hydrogencarbonate + NH4(+) + ATP = carbamoyl phosphate + ADP + H2O + H(+). The protein operates within metabolic intermediate metabolism; carbamoyl phosphate degradation; CO(2) and NH(3) from carbamoyl phosphate: step 1/1. The protein is Carbamate kinase (arcC) of Thermoplasma volcanium (strain ATCC 51530 / DSM 4299 / JCM 9571 / NBRC 15438 / GSS1).